The following is a 252-amino-acid chain: 3-deoxy-manno-octulosonate cytidylyltransferase (252 aa).

The protein belongs to the KdsB family.

It is found in the cytoplasm. The enzyme catalyses 3-deoxy-alpha-D-manno-oct-2-ulosonate + CTP = CMP-3-deoxy-beta-D-manno-octulosonate + diphosphate. It participates in nucleotide-sugar biosynthesis; CMP-3-deoxy-D-manno-octulosonate biosynthesis; CMP-3-deoxy-D-manno-octulosonate from 3-deoxy-D-manno-octulosonate and CTP: step 1/1. Its pathway is bacterial outer membrane biogenesis; lipopolysaccharide biosynthesis. Activates KDO (a required 8-carbon sugar) for incorporation into bacterial lipopolysaccharide in Gram-negative bacteria. The chain is 3-deoxy-manno-octulosonate cytidylyltransferase from Solibacter usitatus (strain Ellin6076).